A 278-amino-acid polypeptide reads, in one-letter code: Coiled-coil domain-containing protein 106 (278 aa).

Residues 61–99 (AQLHLALERNSWLQKRIEDLEEERDFLRCQLDKFISSAR) are a coiled coil. Basic and acidic residues predominate over residues 102-119 (ADDHCRGKPGPRRAEGDG). A disordered region spans residues 102-174 (ADDHCRGKPG…KPKARERQRV (73 aa)). A Phosphoserine modification is found at S128. Positions 131 to 144 (ESAASSLSGASEEG) are enriched in low complexity. Over residues 150 to 166 (KRQKQKGGPGRRRFGKP) the composition is skewed to basic residues. Positions 151–164 (RQKQKGGPGRRRFG) match the Bipartite nuclear localization signal motif.

As to quaternary structure, interacts with p53/TP53.

It is found in the nucleus. Promotes the degradation of p53/TP53 protein and inhibits its transactivity. The protein is Coiled-coil domain-containing protein 106 (CCDC106) of Bos taurus (Bovine).